The chain runs to 21 residues: Dahlein-5.5 (21 aa).

In terms of tissue distribution, expressed by the skin dorsal glands.

Its subcellular location is the secreted. Functionally, has no antimicrobial activity. Strongly inhibits the formation of NO by neuronal nitric oxide synthase at micromolar concentrations. The chain is Dahlein-5.5 from Ranoidea dahlii (Dahl's aquatic frog).